The chain runs to 405 residues: Cystathionine gamma-lyase (405 aa).

The substrate site is built by arginine 62, tyrosine 114, and arginine 119. At lysine 212 the chain carries N6-(pyridoxal phosphate)lysine. Residue glutamate 339 participates in substrate binding.

The protein belongs to the trans-sulfuration enzymes family. As to quaternary structure, homotetramer. Interacts with CALM in a calcium-dependent manner. Pyridoxal 5'-phosphate is required as a cofactor.

The protein resides in the cytoplasm. The enzyme catalyses L,L-cystathionine + H2O = 2-oxobutanoate + L-cysteine + NH4(+). It carries out the reaction L-cysteine + H2O = hydrogen sulfide + pyruvate + NH4(+) + H(+). The catalysed reaction is L-homocysteine + H2O = 2-oxobutanoate + hydrogen sulfide + NH4(+) + H(+). It catalyses the reaction L-homoserine = 2-oxobutanoate + NH4(+). The enzyme catalyses L-selenocystathionine + H2O = L-selenocysteine + 2-oxobutanoate + NH4(+). It participates in amino-acid biosynthesis; L-cysteine biosynthesis; L-cysteine from L-homocysteine and L-serine: step 2/2. In terms of biological role, catalyzes the last step in the trans-sulfuration pathway from L-methionine to L-cysteine in a pyridoxal-5'-phosphate (PLP)-dependent manner, which consists on cleaving the L,L-cystathionine molecule into L-cysteine, ammonia and 2-oxobutanoate. Part of the L-cysteine derived from the trans-sulfuration pathway is utilized for biosynthesis of the ubiquitous antioxidant glutathione. Besides its role in the conversion of L-cystathionine into L-cysteine, it utilizes L-cysteine and L-homocysteine as substrates (at much lower rates than L,L-cystathionine) to produce hydrogen sulfide (H2S). In vitro, it converts two L-cysteine molecules into lanthionine and H2S, and two L-homocysteine molecules to homolanthionine and H2S, which can be particularly relevant under conditions of severe hyperhomocysteinemia. Lanthionine and homolanthionine are structural homologs of L,L-cystathionine that differ by the absence or presence of an extra methylene group, respectively. Acts as a cysteine-protein sulfhydrase by mediating sulfhydration of target proteins: sulfhydration consists of converting -SH groups into -SSH on specific cysteine residues of target proteins such as GAPDH, PTPN1 and NF-kappa-B subunit RELA, thereby regulating their function. By generating the gasotransmitter H2S, it participates in a number of physiological processes such as vasodilation, bone protection, and inflammation. Plays an essential role in myogenesis by contributing to the biogenesis of H2S in skeletal muscle tissue. Can also accept homoserine as substrate. Catalyzes the elimination of selenocystathionine (which can be derived from the diet) to yield selenocysteine, ammonia and 2-oxobutanoate. The protein is Cystathionine gamma-lyase (CTH) of Macaca fascicularis (Crab-eating macaque).